Consider the following 373-residue polypeptide: Leucine aminopeptidase 1 (373 aa).

Positions 1–18 (MKLLSVLALSATASSVLG) are cleaved as a signal peptide. Positions 19-75 (ASIPVDTRAEKFLIELAPGETRWVTEEEKWALKESGQDFFDITDEEVGFTAAVAQPA) are excised as a propeptide. Residues H176 and D195 each contribute to the Zn(2+) site. N196 is a glycosylation site (N-linked (GlcNAc...) asparagine). Zn(2+) is bound by residues E234 and D261. Residue N288 is glycosylated (N-linked (GlcNAc...) asparagine). Residues C310 and C314 are joined by a disulfide bond. Position 343 (H343) interacts with Zn(2+). A glycan (N-linked (GlcNAc...) asparagine) is linked at N348.

It belongs to the peptidase M28 family. M28E subfamily. In terms of assembly, monomer. Zn(2+) serves as cofactor.

The protein resides in the secreted. Functionally, extracellular aminopeptidase that allows assimilation of proteinaceous substrates. The sequence is that of Leucine aminopeptidase 1 (LAP1) from Arthroderma gypseum (strain ATCC MYA-4604 / CBS 118893) (Microsporum gypseum).